The following is an 801-amino-acid chain: Probable inorganic carbon transporter subunit DabA (801 aa).

Residues Cys-332, Asp-334, His-500, and Cys-515 each contribute to the Zn(2+) site.

Belongs to the inorganic carbon transporter (TC 9.A.2) DabA family. Forms a complex with DabB. Zn(2+) is required as a cofactor.

The protein localises to the cell inner membrane. Part of an energy-coupled inorganic carbon pump. The polypeptide is Probable inorganic carbon transporter subunit DabA (Marinobacter nauticus (strain ATCC 700491 / DSM 11845 / VT8) (Marinobacter aquaeolei)).